Reading from the N-terminus, the 956-residue chain is Chromatin assembly factor 1 subunit A (956 aa).

Residues 1–49 (MLEELECGAPGARGAATAMDCKDRPAFPVKKLIQARLPFKRLNLVPKGK) are binds to PCNA. The interval 1–314 (MLEELECGAP…QHSSTSPFPT (314 aa)) is binds to CBX1 chromo shadow domain. 2 disordered regions span residues 45–65 (VPKGKADDMSDDQGTSVQSKS) and 122–155 (DSNEQPDSLVDHNKLNSEASPSREAINGQREDTG). Residues 56–65 (DQGTSVQSKS) show a composition bias toward polar residues. Phosphoserine occurs at positions 65, 123, 138, 141, and 143. Lysine 182 is covalently cross-linked (Glycyl lysine isopeptide (Lys-Gly) (interchain with G-Cter in SUMO1); alternate). Lysine 182 is covalently cross-linked (Glycyl lysine isopeptide (Lys-Gly) (interchain with G-Cter in SUMO2); alternate). The tract at residues 188–222 (VGCGGAGRRGDSQECSPRSCPELTSGPRMCPRKEQ) is disordered. 2 positions are modified to phosphoserine: serine 206 and serine 224. The PxVxL motif signature appears at 233–246 (FKGKVPMVVLQDIL). Disordered stretches follow at residues 250–432 (PPQI…KRLR) and 599–639 (DSDE…VPHG). Composition is skewed to low complexity over residues 282 to 296 (LSHSSLSSPSSTSSP) and 307 to 317 (SSTSPFPTSTP). A Phosphoserine modification is found at serine 310. The span at 329–432 (STEKNKLRLQ…RKKEEEKRLR (104 aa)) shows a compositional bias: basic and acidic residues. 2 stretches are compositionally biased toward acidic residues: residues 599-610 (DSDEEWEEEEPG) and 618-633 (GDDDDDMGEDEDEDDG). The necessary for homodimerization and competence for chromatin assembly stretch occupies residues 642-678 (SEDEGVTEECADPENHKVRQKLKAKEWDEFLAKGKRF). The segment at 660-956 (RQKLKAKEWD…TLTASPLGAS (297 aa)) is binds to p60. Threonine 722 carries the post-translational modification Phosphothreonine. Positions 765-790 (LLSNHTGSPRSPSTTYLHTPTPSEDA) are disordered. A compositionally biased stretch (polar residues) spans 767–786 (SNHTGSPRSPSTTYLHTPTP). A phosphoserine mark is found at serine 772, serine 775, and serine 803. 2 disordered regions span residues 844–873 (SVPSAPKEDSGSVPSTGPSQGTPISLKRKS) and 933–956 (SGAGGGVGVDTGKATLTASPLGAS). Over residues 855 to 866 (SVPSTGPSQGTP) the composition is skewed to polar residues. Threonine 865 bears the Phosphothreonine mark. Residues serine 868, serine 873, and serine 951 each carry the phosphoserine modification.

The protein belongs to the CHAF1A family. In terms of assembly, homodimer. Part of the CAF-1 complex that contains RBBP4, CHAF1B and CHAF1A. CHAF1A binds directly to CHAF1B. Only minor amounts of RBBP4 are complexed with CHAF1A and CHAF1B in G1 phase. Interacts with PCNA; the interaction is direct. Interacts (via the PxVxL motif) with CBX5; the interaction is direct. Interacts with MBD1. Interacts with histones H3.1, H3.2 and H3.1t.

It localises to the nucleus. Acts as a component of the histone chaperone complex chromatin assembly factor 1 (CAF-1), which assembles histone octamers onto DNA during replication and repair. CAF-1 performs the first step of the nucleosome assembly process, bringing newly synthesized histones H3 and H4 to replicating DNA; histones H2A/H2B can bind to this chromatin precursor subsequent to DNA replication to complete the histone octamer. It may play a role in heterochromatin maintenance in proliferating cells by bringing newly synthesized cbx proteins to heterochromatic DNA replication foci. This chain is Chromatin assembly factor 1 subunit A, found in Homo sapiens (Human).